The following is a 787-amino-acid chain: MEPAGERFPEQRQVLILLLLLEVTLAGWEPRRYSVMEETERGSFVANLANDLGLGVGELAERGARVVSEDNEQGLQLDLQTGQLILNEKLDREKLCGPTEPCIMHFQVLLKKPLEVIRAELLVTDINDHSPEFPEREITLKIPETSSLGTVFPLKKARDLDVGSNNVQNYNISPNSHFHVSTRTRGDGRKYPELVLDTELDREEQAELRLTLTAVDGGSPPRSGTVQILILVLDANDNAPEFAQALYEVQVPENSPVGSLVVKVSARDLDTGTNGEISYSLYYSSEEINKPFELSSLSGEIRLIKKLDFETMSSYDLDIEASDGGGLSGKCSVSVKVLDVNDNFPELSISSLTSPIPENSPETEVALFRIRDRDSGENGKMICSIQDDVPFKLKPSVENFYRLVTEGALDRETRAEYNITITITDLGTPRLKTQHNITVLVSDVNDNAPAFTQTSYTLFVRENNSPALHIGSVSATDRDSGTNAQVTYSLLPPQDPHLPLASLVSINTDNGHLFALRSLDYEALQAFEFHVGATDRGSPALSSEALVRVLVLDANDNSPFVLYPLQNGSAPCTELVPRAAEPGYVVTKVVAVDGDSGQNAWLSYQLLKATEPGLFGVWAHNGEVRTARLLSERDVAKHRLVVLVKDNGEPPRSATATLQVLLVDGFSQPYLPLPEAAPAQAQADSLTVYLVVALASVSSLFLFSVLLFVAVRLCRRSRAASVGRYSVPEGPFPGHRVDVSGTGTLSQSYQYEVCLTGGSESNDFKFLKPIFPNIVSQDSRRKSEFLE.

The N-terminal stretch at 1–26 is a signal peptide; sequence MEPAGERFPEQRQVLILLLLLEVTLA. Residues 27 to 690 are Extracellular-facing; sequence GWEPRRYSVM…AQADSLTVYL (664 aa). Cadherin domains are found at residues 35-133, 138-242, 247-347, 352-451, and 456-561; these read VMEE…SPEF, ITLK…APEF, YEVQ…FPEL, LTSP…APAF, and YTLF…SPFV. N-linked (GlcNAc...) asparagine glycosylation is found at Asn-418 and Asn-436. Asn-567 is a glycosylation site (N-linked (GlcNAc...) asparagine). A Cadherin 6 domain is found at 568 to 671; it reads GSAPCTELVP…LVDGFSQPYL (104 aa). The chain crosses the membrane as a helical span at residues 691-711; the sequence is VVALASVSSLFLFSVLLFVAV. The Cytoplasmic segment spans residues 712 to 787; the sequence is RLCRRSRAAS…DSRRKSEFLE (76 aa).

The protein localises to the cell membrane. Potential calcium-dependent cell-adhesion protein. May be involved in the establishment and maintenance of specific neuronal connections in the brain. This Pan troglodytes (Chimpanzee) protein is Protocadherin beta-15 (PCDHB15).